A 50-amino-acid chain; its full sequence is MGKKSKATKKRLAKLDNQNSRVPAWVMLKTDREVQRNHKRRHWRRNDTDE.

The protein belongs to the eukaryotic ribosomal protein eL39 family. Part of the 50S ribosomal subunit. Interacts weakly with protein L23.

Binds to the 23S rRNA. Forms part of the polypeptide exit tunnel. This Haloarcula marismortui (strain ATCC 43049 / DSM 3752 / JCM 8966 / VKM B-1809) (Halobacterium marismortui) protein is Large ribosomal subunit protein eL39 (rpl39e).